A 112-amino-acid polypeptide reads, in one-letter code: Seminal vesicle secretory protein 4 (112 aa).

The N-terminal stretch at 1 to 21 (MKSTSLFLCSLLLLLVTGAIG) is a signal peptide. Residues 26–112 (EKYSQSEEVV…RSRFAQDVLN (87 aa)) form a disordered region. Low complexity-rich tracts occupy residues 36–47 (SESFASGPSSGS) and 85–97 (RSSG…GESS).

It belongs to the SVP2/SVP5/SVP6 family. As to expression, testis.

The protein resides in the secreted. It localises to the extracellular space. This chain is Seminal vesicle secretory protein 4 (Svs4), found in Rattus norvegicus (Rat).